Reading from the N-terminus, the 438-residue chain is Trigger factor (438 aa).

The region spanning 160–245 (DDKVVIDFVG…VKKIQEAQLP (86 aa)) is the PPIase FKBP-type domain.

This sequence belongs to the FKBP-type PPIase family. Tig subfamily.

The protein localises to the cytoplasm. The catalysed reaction is [protein]-peptidylproline (omega=180) = [protein]-peptidylproline (omega=0). Its function is as follows. Involved in protein export. Acts as a chaperone by maintaining the newly synthesized protein in an open conformation. Functions as a peptidyl-prolyl cis-trans isomerase. This Francisella philomiragia subsp. philomiragia (strain ATCC 25017 / CCUG 19701 / FSC 153 / O#319-036) protein is Trigger factor.